A 545-amino-acid chain; its full sequence is Glucose-6-phosphate isomerase (545 aa).

Glu351 acts as the Proton donor in catalysis. Residues His382 and Lys510 contribute to the active site.

This sequence belongs to the GPI family.

It is found in the cytoplasm. The enzyme catalyses alpha-D-glucose 6-phosphate = beta-D-fructose 6-phosphate. The protein operates within carbohydrate biosynthesis; gluconeogenesis. It functions in the pathway carbohydrate degradation; glycolysis; D-glyceraldehyde 3-phosphate and glycerone phosphate from D-glucose: step 2/4. In terms of biological role, catalyzes the reversible isomerization of glucose-6-phosphate to fructose-6-phosphate. The polypeptide is Glucose-6-phosphate isomerase (Shewanella sp. (strain MR-4)).